The following is a 338-amino-acid chain: DNA-directed RNA polymerase subunit alpha (338 aa).

The alpha N-terminal domain (alpha-NTD) stretch occupies residues 1 to 234 (MIQKNWQELI…DQLNVFVNFE (234 aa)). An alpha C-terminal domain (alpha-CTD) region spans residues 250–338 (FNPALLKKVD…ELAKRFEEHY (89 aa)).

This sequence belongs to the RNA polymerase alpha chain family. As to quaternary structure, homodimer. The RNAP catalytic core consists of 2 alpha, 1 beta, 1 beta' and 1 omega subunit. When a sigma factor is associated with the core the holoenzyme is formed, which can initiate transcription.

It catalyses the reaction RNA(n) + a ribonucleoside 5'-triphosphate = RNA(n+1) + diphosphate. In terms of biological role, DNA-dependent RNA polymerase catalyzes the transcription of DNA into RNA using the four ribonucleoside triphosphates as substrates. The polypeptide is DNA-directed RNA polymerase subunit alpha (Beijerinckia indica subsp. indica (strain ATCC 9039 / DSM 1715 / NCIMB 8712)).